Here is a 317-residue protein sequence, read N- to C-terminus: Melanocyte-stimulating hormone receptor (317 aa).

Residues 1–37 are Extracellular-facing; it reads MPMQEPQRRLLDPFNSTRTGTPHLKLSANQTGPWCLH. 2 N-linked (GlcNAc...) asparagine glycosylation sites follow: Asn15 and Asn29. The helical transmembrane segment at 38–63 threads the bilayer; the sequence is VSIPDGLFLSLGLVSLVENVLVVISI. Residues 64–72 lie on the Cytoplasmic side of the membrane; it reads AKNRNLHSP. Residues 73-93 form a helical membrane-spanning segment; sequence MYYFICCLALSDLLVSVSIVL. The Extracellular portion of the chain corresponds to 94-118; it reads ETTLILVLEAGALATRVTVVQQLDN. Residues 119-140 traverse the membrane as a helical segment; it reads VIDVLICGSMVSSLCFLGAIAV. The Cytoplasmic portion of the chain corresponds to 141–163; the sequence is DRYISIFYALRYHSIVTLPRARW. The chain crosses the membrane as a helical span at residues 164-183; sequence AIVAIWVASISSSTLFVAYY. Topologically, residues 184 to 191 are extracellular; that stretch reads NHTAVLLC. Residues 192-211 traverse the membrane as a helical segment; sequence LVTFFLATLALMAVLYVHML. Topologically, residues 212–240 are cytoplasmic; the sequence is ARAHQHAQAIAQLHKRQHLVHQGFRLKGA. A helical transmembrane segment spans residues 241 to 266; sequence ATLTILLGIFFLCWGPFFLYLTLIVL. Residues 267–279 are Extracellular-facing; it reads CPKHPTCSCFFKN. A helical transmembrane segment spans residues 280-300; that stretch reads LNLFLALIIFNSIVDPLIYAF. Residues 301–317 are Cytoplasmic-facing; that stretch reads RSQELRMTLKEVLLCSW. Cys315 is lipidated: S-palmitoyl cysteine.

The protein belongs to the G-protein coupled receptor 1 family. Interacts with MGRN1, but does not undergo MGRN1-mediated ubiquitination; this interaction competes with GNAS-binding and thus inhibits agonist-induced cAMP production. Interacts with OPN3; the interaction results in a decrease in MC1R-mediated cAMP signaling and ultimately a decrease in melanin production in melanocytes.

The protein resides in the cell membrane. Receptor for MSH (alpha, beta and gamma) and ACTH. The activity of this receptor is mediated by G proteins which activate adenylate cyclase. Mediates melanogenesis, the production of eumelanin (black/brown) and phaeomelanin (red/yellow), via regulation of cAMP signaling in melanocytes. The protein is Melanocyte-stimulating hormone receptor (MC1R) of Chaetodipus baileyi (Bailey's pocket mouse).